The sequence spans 329 residues: R-linalool synthase (329 aa).

Asp79 lines the Mg(2+) pocket. Positions 79–83 (DDQFD) match the DDXXD motif motif. Residue Arg172 participates in substrate binding. Mg(2+) is bound by residues Asn218 and Ser222. The short motif at 218–226 (NELHSFEKD) is the NXXXSXXXD motif element. Substrate is bound at residue Lys225. Asp226 is a binding site for Mg(2+). 308–309 (RY) contributes to the substrate binding site.

It belongs to the terpene synthase family. Homodimer. The cofactor is Mg(2+).

It carries out the reaction (2E)-geranyl diphosphate + H2O = (R)-linalool + diphosphate. It catalyses the reaction (2E,6E)-farnesyl diphosphate + H2O = (6E)-nerolidol + diphosphate. Functionally, in vitro, catalyzes the formation of R-linalool from geranyl diphosphate (GPP). Can also accept farnesyl diphosphate (FPP) as substrate to produce trans-nerolidol. The sequence is that of R-linalool synthase from Streptomyces clavuligerus.